Reading from the N-terminus, the 655-residue chain is MQAARMAASLGRQLLRLGGGSSRLTALLGQPRPGPARRPYAGGAAQLALDKSDSHPSDALTRKKPAKAESKSFAVGMFKGQLTTDQVFPYPSVLNEEQTQFLKELVEPVSRFFEEVNDPAKNDALEMVEETTWQGLKELGAFGLQVPSELGGVGLCNTQYARLVEIVGMHDLGVGITLGAHQSIGFKGILLFGTKAQKEKYLPKLASGETVAAFCLTEPSSGSDAASIRTSAVPSPCGKYYTLNGSKLWISNGGLADIFTVFAKTPVTDPATGAVKEKITAFVVERGFGGITHGPPEKKMGIKASNTAEVFFDGVRVPSENVLGEVGSGFKVAMHILNNGRFGMAAALAGTMRGIIAKAVDHATNRTQFGEKIHNFGLIQEKLARMVMLQYVTESMAYMVSANMDQGATDFQIEAAISKIFGSEAAWKVTDECIQIMGGMGFMKEPGVERVLRDLRIFRIFEGTNDILRLFVALQGCMDKGKELSGLGSALKNPFGNAGLLLGEAGKQLRRRAGLGSGLSLSGLVHPELSRSGELAVRALEQFATVVEAKLIKHKKGIVNEQFLLQRLADGAIDLYAMVVVLSRASRSLSEGHPTAQHEKMLCDTWCIEAAARIREGMAALQSDPWQQELYRNFKSISKALVERGGVVTSNPLGF.

Residues 1-40 constitute a mitochondrion transit peptide; that stretch reads MQAARMAASLGRQLLRLGGGSSRLTALLGQPRPGPARRPY. Residues 23-42 form a disordered region; sequence RLTALLGQPRPGPARRPYAG. The tract at residues 41–482 is catalytic; it reads AGGAAQLALD…ALQGCMDKGK (442 aa). Residue K51 is modified to N6-acetyllysine. An N6-acetyllysine; alternate modification is found at K71. At K71 the chain carries N6-succinyllysine; alternate. K195 carries the N6-succinyllysine modification. 214–223 is an FAD binding site; that stretch reads FCLTEPSSGS. An S-nitrosocysteine modification is found at C237. An N6-acetyllysine; alternate modification is found at K239. Position 239 is an N6-succinyllysine; alternate (K239). 249–251 is an FAD binding site; that stretch reads WIS. K276 and K278 each carry N6-acetyllysine; alternate. Residues K276 and K278 each carry the N6-succinyllysine; alternate modification. N6-acetyllysine is present on K298. At K331 the chain carries N6-acetyllysine; alternate. K331 bears the N6-succinyllysine; alternate mark. K372 carries the post-translational modification N6-succinyllysine. Position 461–463 (461–463) interacts with substrate; sequence FEG. E462 serves as the catalytic Proton acceptor. 464-466 is an FAD binding site; the sequence is TND. Position 482 is an N6-acetyllysine; alternate (K482). K482 bears the N6-succinyllysine; alternate mark. Residues 483 to 516 are membrane-anchoring; the sequence is ELSGLGSALKNPFGNAGLLLGEAGKQLRRRAGLG. Phosphoserine occurs at positions 517 and 522. K550 bears the N6-acetyllysine mark. An N6-acetyllysine; alternate modification is found at K556. K556 carries the N6-succinyllysine; alternate modification. Q562 contributes to the FAD binding site. K639 is subject to N6-succinyllysine.

This sequence belongs to the acyl-CoA dehydrogenase family. In terms of assembly, homodimer. Homodimerizes after import into the mitochondrion. FAD is required as a cofactor. In terms of processing, S-nitrosylation at Cys-237 in liver improves catalytic efficiency. Predominantly expressed in heart and skeletal muscle (at protein level). Also detected in kidney and liver (at protein level).

The protein localises to the mitochondrion inner membrane. The catalysed reaction is a very-long-chain 2,3-saturated fatty acyl-CoA + oxidized [electron-transfer flavoprotein] + H(+) = a very-long-chain (2E)-enoyl-CoA + reduced [electron-transfer flavoprotein]. It catalyses the reaction decanoyl-CoA + oxidized [electron-transfer flavoprotein] + H(+) = (2E)-decenoyl-CoA + reduced [electron-transfer flavoprotein]. It carries out the reaction dodecanoyl-CoA + oxidized [electron-transfer flavoprotein] + H(+) = (2E)-dodecenoyl-CoA + reduced [electron-transfer flavoprotein]. The enzyme catalyses tetradecanoyl-CoA + oxidized [electron-transfer flavoprotein] + H(+) = (2E)-tetradecenoyl-CoA + reduced [electron-transfer flavoprotein]. The catalysed reaction is oxidized [electron-transfer flavoprotein] + hexadecanoyl-CoA + H(+) = (2E)-hexadecenoyl-CoA + reduced [electron-transfer flavoprotein]. It catalyses the reaction octadecanoyl-CoA + oxidized [electron-transfer flavoprotein] + H(+) = (2E)-octadecenoyl-CoA + reduced [electron-transfer flavoprotein]. It carries out the reaction eicosanoyl-CoA + oxidized [electron-transfer flavoprotein] + H(+) = (2E)-eicosenoyl-CoA + reduced [electron-transfer flavoprotein]. The enzyme catalyses docosanoyl-CoA + oxidized [electron-transfer flavoprotein] + H(+) = (2E)-docosenoyl-CoA + reduced [electron-transfer flavoprotein]. The catalysed reaction is tetracosanoyl-CoA + oxidized [electron-transfer flavoprotein] + H(+) = (2E)-tetracosenoyl-CoA + reduced [electron-transfer flavoprotein]. It catalyses the reaction (9Z)-hexadecenoyl-CoA + oxidized [electron-transfer flavoprotein] + H(+) = (2E,9Z)-hexadecadienoyl-CoA + reduced [electron-transfer flavoprotein]. It carries out the reaction oxidized [electron-transfer flavoprotein] + (9Z)-octadecenoyl-CoA + H(+) = (2E,9Z)-octadecadienoyl-CoA + reduced [electron-transfer flavoprotein]. It participates in lipid metabolism; mitochondrial fatty acid beta-oxidation. In terms of biological role, very long-chain specific acyl-CoA dehydrogenase is one of the acyl-CoA dehydrogenases that catalyze the first step of mitochondrial fatty acid beta-oxidation, an aerobic process breaking down fatty acids into acetyl-CoA and allowing the production of energy from fats. The first step of fatty acid beta-oxidation consists in the removal of one hydrogen from C-2 and C-3 of the straight-chain fatty acyl-CoA thioester, resulting in the formation of trans-2-enoyl-CoA. Among the different mitochondrial acyl-CoA dehydrogenases, very long-chain specific acyl-CoA dehydrogenase acts specifically on acyl-CoAs with saturated 12 to 24 carbons long primary chains. The polypeptide is Very long-chain specific acyl-CoA dehydrogenase, mitochondrial (Homo sapiens (Human)).